Here is a 200-residue protein sequence, read N- to C-terminus: NAD(P)H dehydrogenase (quinone) (200 aa).

One can recognise a Flavodoxin-like domain in the interval 4 to 191 (ILVLYHSLWG…TIARFQGRHV (188 aa)). FMN-binding positions include 10–15 (SLWGHV) and 79–81 (TRF). Residue Trp-12 participates in NAD(+) binding. Trp-99 is a substrate binding site. Residues 114–120 (STATQHG) and His-135 contribute to the FMN site.

It belongs to the WrbA family. FMN serves as cofactor.

It carries out the reaction a quinone + NADH + H(+) = a quinol + NAD(+). It catalyses the reaction a quinone + NADPH + H(+) = a quinol + NADP(+). The sequence is that of NAD(P)H dehydrogenase (quinone) from Acidithiobacillus ferrooxidans (strain ATCC 53993 / BNL-5-31) (Leptospirillum ferrooxidans (ATCC 53993)).